Consider the following 134-residue polypeptide: MDFVMKQALGGATKDMGKMLGGEEEKDPDAQKKEEERQEALRQQEEERKAKHARMEAEREKVRQQIRDKYGLKKKEEKEAEEKAALEQPCEGSLTRPKKAIPAGCGDEEEEEEESILDTVLKYLPGPLQDMFKK.

The tract at residues 1–114 (MDFVMKQALG…CGDEEEEEEE (114 aa)) is disordered. Residues 15–85 (DMGKMLGGEE…EEKEAEEKAA (71 aa)) are compositionally biased toward basic and acidic residues. A coiled-coil region spans residues 28 to 84 (PDAQKKEEERQEALRQQEEERKAKHARMEAEREKVRQQIRDKYGLKKKEEKEAEEKA). The segment at 41–97 (LRQQEEERKAKHARMEAEREKVRQQIRDKYGLKKKEEKEAEEKAALEQPCEGSLTRP) is interaction with the SNARE complex. Phosphoserine is present on serine 93.

It belongs to the complexin/synaphin family. As to quaternary structure, binds to the SNARE core complex containing SNAP25, VAMP2 and STX1A. In terms of tissue distribution, nervous system. Also present in adrenal chromaffin cells (at protein level).

Its subcellular location is the cytoplasm. The protein localises to the cytosol. The protein resides in the presynapse. It is found in the nucleus. It localises to the perikaryon. Functionally, negatively regulates the formation of synaptic vesicle clustering at active zone to the presynaptic membrane in postmitotic neurons. Positively regulates a late step in exocytosis of various cytoplasmic vesicles, such as synaptic vesicles and other secretory vesicles. Also involved in mast cell exocytosis. In Bos taurus (Bovine), this protein is Complexin-2 (CPLX2).